Here is a 426-residue protein sequence, read N- to C-terminus: UPF0597 protein CLD_2825 (426 aa).

Belongs to the UPF0597 family.

This is UPF0597 protein CLD_2825 from Clostridium botulinum (strain Okra / Type B1).